A 293-amino-acid polypeptide reads, in one-letter code: Phycoerythrin class 2 subunit gamma, linker polypeptide (293 aa).

C49 is a binding site for phycourobilin. In terms of domain architecture, PBS-linker spans 50–229; sequence AAMGIGIGPR…LGGMKVAISD (180 aa).

Contains one covalently linked phycourobilin chromophore.

Its subcellular location is the cellular thylakoid membrane. Functionally, this protein is a bile pigment-bearing rod linker polypeptide that associates with C-phycoerythrin. This is Phycoerythrin class 2 subunit gamma, linker polypeptide (mpeC) from Synechococcus sp. (strain WH8020).